The primary structure comprises 235 residues: Protein RESISTANCE TO PHYTOPHTHORA 1, chloroplastic (235 aa).

A chloroplast-targeting transit peptide spans 1–43 (MNSATTMSASVLNYQILKFFPPQKNGFLKSPLIRGKICRFCVS). Over residues 53–66 (VIEDPKEETQEKSD) the composition is skewed to basic and acidic residues. Residues 53–92 (VIEDPKEETQEKSDGVIVNSTEEEEERSGENSTSTGPSTV) are disordered. 4 helical membrane passes run 131–151 (FEVQ…NLIF), 158–178 (IWRL…LRAR), 188–208 (LNYL…FLKS), and 211–231 (VVWS…LGWL).

It localises to the plastid. The protein resides in the chloroplast. Its subcellular location is the membrane. In terms of biological role, plays a positive role in the immune response to the oomycetes P.infestans, including induced oxidative burst and enhanced expression of defense-related genes. This Solanum tuberosum (Potato) protein is Protein RESISTANCE TO PHYTOPHTHORA 1, chloroplastic.